Consider the following 136-residue polypeptide: Ribosome-binding factor A (136 aa).

This sequence belongs to the RbfA family. As to quaternary structure, monomer. Binds 30S ribosomal subunits, but not 50S ribosomal subunits or 70S ribosomes.

Its subcellular location is the cytoplasm. In terms of biological role, one of several proteins that assist in the late maturation steps of the functional core of the 30S ribosomal subunit. Associates with free 30S ribosomal subunits (but not with 30S subunits that are part of 70S ribosomes or polysomes). Required for efficient processing of 16S rRNA. May interact with the 5'-terminal helix region of 16S rRNA. The sequence is that of Ribosome-binding factor A from Rhodopseudomonas palustris (strain BisB5).